Reading from the N-terminus, the 151-residue chain is Small ribosomal subunit protein uS15 (151 aa).

Belongs to the universal ribosomal protein uS15 family.

The polypeptide is Small ribosomal subunit protein uS15 (RpS13) (Choristoneura parallela (Spotted fireworm moth)).